The chain runs to 293 residues: Movement protein BC1 (293 aa).

It belongs to the begomovirus movement protein BC1 family. In terms of assembly, binds to dimeric supercoiled plasmid DNA. Phosphorylated.

It is found in the host cell membrane. It localises to the host microsome membrane. Its subcellular location is the host endoplasmic reticulum membrane. Functionally, transports viral genome to neighboring plant cells directly through plasmosdesmata, without any budding. The movement protein allows efficient cell to cell propagation, by bypassing the host cell wall barrier. Begomovirus genome is shuttled out of nucleus by Nuclear shuttle protein (NSP) and the movement protein transports the DNA-NSP complex to cell plasmodesmata and facilitates further movement across the cell wall. The sequence is that of Movement protein BC1 from Potato yellow mosaic virus (isolate Venezuela) (PYMV).